Reading from the N-terminus, the 24-residue chain is Brevinin-1SY (24 aa).

Cys-18 and Cys-24 form a disulfide bridge.

As to expression, expressed by the skin glands.

It localises to the secreted. Functionally, antibacterial activity against Gram-positive bacterium S.aureus and Gram-negative bacterium E.coli. The polypeptide is Brevinin-1SY (Lithobates sylvaticus (Wood frog)).